The chain runs to 213 residues: Putative 3-methyladenine DNA glycosylase (213 aa).

This sequence belongs to the DNA glycosylase MPG family.

The polypeptide is Putative 3-methyladenine DNA glycosylase (Leifsonia xyli subsp. xyli (strain CTCB07)).